Here is a 414-residue protein sequence, read N- to C-terminus: Serine-type anaerobic sulfatase-maturating enzyme (414 aa).

Residues 5–250 (TYAPFAKPLY…LCTIFDEWVK (246 aa)) form the Radical SAM core domain. The [4Fe-4S] cluster site is built by cysteine 24 and cysteine 28. Tyrosine 30 serves as a coordination point for S-adenosyl-L-methionine. Cysteine 31 serves as a coordination point for [4Fe-4S] cluster. S-adenosyl-L-methionine contacts are provided by glycine 76, serine 131, and arginine 143. 3 residues coordinate [4Fe-4S] cluster: cysteine 276, cysteine 282, and cysteine 297. Aspartate 298 acts as the Proton acceptor in catalysis. Positions 339, 342, 348, 352, and 371 each coordinate [4Fe-4S] cluster.

The protein belongs to the radical SAM superfamily. Anaerobic sulfatase-maturating enzyme family. [4Fe-4S] cluster is required as a cofactor.

The enzyme catalyses L-seryl-[sulfatase] + S-adenosyl-L-methionine = 3-oxo-L-alanyl-[sulfatase] + 5'-deoxyadenosine + L-methionine + H(+). It participates in protein modification; sulfatase oxidation. Involved in 'Ser-type' sulfatase maturation under anaerobic conditions. Links the heparin and the chondroitin sulfate utilization pathways which contribute to the colonization of the intestinal tract. May catalyze the activation of chondro-6-sulfatase, i.e. the post-translational modification of a specific serine residue into 3-oxoalanine (also known as C(alpha)-formylglycine (FGly)), by a free radical chemical mechanism initiated via the reductive cleavage of S-adenosyl-L-methionine (SAM). Is also able to oxidize a cysteine residue in a synthetic substrate to FGly in vitro, but not in a recombinant Cys-type sulfatase in vivo. But since B.thetaiotaomicron possesses only Ser-type sulfatases, the oxidation of serine residues to FGly is the sole physiological activity. In Bacteroides thetaiotaomicron (strain ATCC 29148 / DSM 2079 / JCM 5827 / CCUG 10774 / NCTC 10582 / VPI-5482 / E50), this protein is Serine-type anaerobic sulfatase-maturating enzyme (chuR).